Here is a 195-residue protein sequence, read N- to C-terminus: Cysteine/O-acetylserine efflux protein (195 aa).

The Periplasmic portion of the chain corresponds to 1 to 9 (MTPMLLSAF). A helical membrane pass occupies residues 10 to 32 (WTYTLITALTPGPNNILALSAAT). The Cytoplasmic portion of the chain corresponds to 33-46 (AHGFRQSIRVLAGM). The helical transmembrane segment at 47–67 (SLGFLVVMLLCAGIAFSLAVI) threads the bilayer. Residues 68–69 (DP) lie on the Periplasmic side of the membrane. The chain crosses the membrane as a helical span at residues 70-90 (AIIHLLSWVGAAYILWLAWKI). The Cytoplasmic portion of the chain corresponds to 91 to 104 (ATSPAADEKVRPKP). Residues 105-125 (VGFWVSFGLQFVNVKIILYGI) traverse the membrane as a helical segment. Residues 126–141 (TALSTFVLPQTQALNW) are Periplasmic-facing. A helical transmembrane segment spans residues 142–162 (VIGVSILLALIGTFGNVCWAL). Topologically, residues 163–176 (AGHLFQRAFRHYGR) are cytoplasmic. A helical membrane pass occupies residues 177 to 194 (QLNIILALLLVYCAVRIF). A topological domain (periplasmic) is located at residue Tyr-195.

Belongs to the Rht family.

The protein localises to the cell inner membrane. The enzyme catalyses O-acetyl-L-serine(in) = O-acetyl-L-serine(out). It catalyses the reaction L-cysteine(in) = L-cysteine(out). Exporter of O-acetylserine (OAS) and cysteine. The sequence is that of Cysteine/O-acetylserine efflux protein (eamB) from Salmonella paratyphi A (strain ATCC 9150 / SARB42).